The sequence spans 786 residues: Ribosome biogenesis protein BOP1 homolog (786 aa).

A compositionally biased stretch (basic residues) spans 1-11 (MAKKSAIKRKV). The segment at 1–161 (MAKKSAIKRK…NSDTSDEEDI (161 aa)) is disordered. Residues 17–26 (INEQASVSEQ) are compositionally biased toward polar residues. Acidic residues-rich tracts occupy residues 44 to 53 (EDTTDDEGID), 60 to 72 (TSDDLLFESDEEG), and 82 to 114 (SGEDEQGEEDDNDDEEEEDEDEEESGSSDDDAK). The span at 122-135 (KATLSKTTGDSSNI) shows a compositional bias: polar residues. Residues 141–150 (PRRDPSKPEY) are compositionally biased toward basic and acidic residues. Positions 151–160 (ENSDTSDEED) are enriched in acidic residues. WD repeat units lie at residues 447–488 (GHTD…RTIE), 490–528 (NDVVRCVAWCPNAKLSIIAVATGTRLLLINPKVGDKLLV), 572–614 (THFK…SQIP), 617–655 (KSKGLIQCVLFHPVKPCFFVATQHNIRIYDLVKQELIKK), 658–697 (TNSKWISGMSIHPKGDNLLVSTYDKKMLWFDLDLSTKPYQ), 701–740 (LHRNAVRSIAFHLRYPLFASGSDDQAVIVSHGMVYNDLLQ), and 756–786 (RDEFGVLDVNWHPVQPWIFSTGADCTIRLYT).

It belongs to the WD repeat BOP1/ERB1 family.

The protein resides in the nucleus. The protein localises to the nucleolus. It is found in the nucleoplasm. Its function is as follows. Required for maturation of ribosomal RNAs and formation of the large ribosomal subunit. This is Ribosome biogenesis protein BOP1 homolog from Drosophila grimshawi (Hawaiian fruit fly).